A 113-amino-acid chain; its full sequence is Hydrogenase maturation factor HypA (113 aa).

Residue histidine 2 coordinates Ni(2+). 4 residues coordinate Zn(2+): cysteine 73, cysteine 76, cysteine 89, and cysteine 92.

Belongs to the HypA/HybF family.

Its function is as follows. Involved in the maturation of [NiFe] hydrogenases. Required for nickel insertion into the metal center of the hydrogenase. The chain is Hydrogenase maturation factor HypA from Legionella pneumophila (strain Paris).